The primary structure comprises 1150 residues: ATP-dependent helicase/deoxyribonuclease subunit B (1150 aa).

8–15 (GRAGSGKS) is an ATP binding site. [4Fe-4S] cluster is bound by residues Cys786, Cys1106, Cys1109, and Cys1115.

It belongs to the helicase family. AddB/RexB type 1 subfamily. Heterodimer of AddA and AddB. The cofactor is Mg(2+). [4Fe-4S] cluster serves as cofactor.

The heterodimer acts as both an ATP-dependent DNA helicase and an ATP-dependent, dual-direction single-stranded exonuclease. Recognizes the chi site generating a DNA molecule suitable for the initiation of homologous recombination. The AddB subunit has 5' -&gt; 3' nuclease activity but not helicase activity. This chain is ATP-dependent helicase/deoxyribonuclease subunit B, found in Clostridium botulinum (strain Okra / Type B1).